A 154-amino-acid chain; its full sequence is Myoglobin (154 aa).

The Globin domain occupies 2 to 148; that stretch reads GLSDGEWQLV…FRNDIAAKYK (147 aa). At S4 the chain carries Phosphoserine. H65 provides a ligand contact to nitrite. An O2-binding site is contributed by H65. Phosphothreonine is present on T68. H94 contributes to the heme b binding site.

The protein belongs to the globin family. Monomeric.

The protein resides in the cytoplasm. Its subcellular location is the sarcoplasm. The enzyme catalyses Fe(III)-heme b-[protein] + nitric oxide + H2O = Fe(II)-heme b-[protein] + nitrite + 2 H(+). The catalysed reaction is H2O2 + AH2 = A + 2 H2O. Its function is as follows. Monomeric heme protein which primary function is to store oxygen and facilitate its diffusion within muscle tissues. Reversibly binds oxygen through a pentacoordinated heme iron and enables its timely and efficient release as needed during periods of heightened demand. Depending on the oxidative conditions of tissues and cells, and in addition to its ability to bind oxygen, it also has a nitrite reductase activity whereby it regulates the production of bioactive nitric oxide. Under stress conditions, like hypoxia and anoxia, it also protects cells against reactive oxygen species thanks to its pseudoperoxidase activity. This Meles meles (Eurasian badger) protein is Myoglobin (MB).